A 527-amino-acid chain; its full sequence is MGSEYKHILKSLCLSHGWSYAVFWRYDPINSMILRFEEAYNDEQSVALVDDMVLQAPILGQGIVGEVASSGNHQWLFSDTLFQWEHEFQNQFLCGFKILIRQFTYTQTIAIIPLGSSGVVQLGSTQKILESTEILEQTTRALQETCLKPHDSGDLDTLFESLGDCEIFPAESFQGFSFDDIFAEDNPPSLLSPEMISSEAASSNQDLTNGDDYGFDILQSYSLDDLYQLLADPPEQNCSSMVIQGVDKDLFDILGMNSQTPTMALPPKGLFSELISSSLSNNTCSSSLTNVQEYSGVNQSKRRKLDTSSAHSSSLFPQEETVTSRSLWIDDDERSSIGGNWKKPHEEGVKKKRAKAGESRRPRPKDRQMIQDRIKELRGMIPNGAKCSIDTLLDLTIKHMVFMQSLAKYAERLKQPYESKLVKEKERTWALEVGEEGVVCPIMVEELNREGEMQIEMVCEEREEFLEIGQVVRGLGLKILKGVMETRKGQIWAHFIVQAKPQVTRIQVLYSLVQLFQHHTKHDDLLS.

Disordered stretches follow at residues 295–318 and 335–368; these read SGVNQSKRRKLDTSSAHSSSLFPQ and SSIGGNWKKPHEEGVKKKRAKAGESRRPRPKDRQ. Positions 307–318 are enriched in polar residues; that stretch reads TSSAHSSSLFPQ. Positions 341 to 348 match the Nuclear localization signal motif; sequence WKKPHEEG. Basic and acidic residues predominate over residues 343-368; sequence KPHEEGVKKKRAKAGESRRPRPKDRQ. Residues 354–403 enclose the bHLH domain; that stretch reads AKAGESRRPRPKDRQMIQDRIKELRGMIPNGAKCSIDTLLDLTIKHMVFM.

This sequence belongs to the bHLH protein family. LHW subfamily. As to quaternary structure, homodimer.

It localises to the nucleus. Transcription factor that may regulate root development. The polypeptide is Transcription factor bHLH157 (BHLH157) (Arabidopsis thaliana (Mouse-ear cress)).